A 307-amino-acid chain; its full sequence is Dihydroorotate dehydrogenase A (fumarate) (307 aa).

Residues Ser-21 and Lys-46–Thr-47 contribute to the FMN site. Residues Lys-46, Asn-70 to Leu-74, and Asn-130 each bind substrate. FMN is bound at residue Asn-130. Cys-133 functions as the Nucleophile in the catalytic mechanism. FMN is bound by residues Lys-168 and Ile-194. Residue Asn-195–Thr-196 coordinates substrate. Residues Gly-220, Gly-246–Gly-247, and Gly-268–Ser-269 contribute to the FMN site.

It belongs to the dihydroorotate dehydrogenase family. Type 1 subfamily. In terms of assembly, homodimer. Requires FMN as cofactor.

It localises to the cytoplasm. The enzyme catalyses (S)-dihydroorotate + fumarate = orotate + succinate. Its pathway is pyrimidine metabolism; UMP biosynthesis via de novo pathway. Functionally, catalyzes the conversion of dihydroorotate to orotate with fumarate as the electron acceptor. This is Dihydroorotate dehydrogenase A (fumarate) (pyrD) from Lactobacillus delbrueckii subsp. bulgaricus (strain ATCC 11842 / DSM 20081 / BCRC 10696 / JCM 1002 / NBRC 13953 / NCIMB 11778 / NCTC 12712 / WDCM 00102 / Lb 14).